The following is a 389-amino-acid chain: MESINDVSEICLQLVNLNYSDQLDFKLNLIKQYIPNLLTNQVIASPLVDNYRNKLRFDIGLSNHDLITIGYSLPKKKNTHRYVYSSISMKHLHPKMIQIVSKIELFLRTHEQSWYSIKHGETLLPSMTIRTSFHTEDVMIIFKFKGPQNETVINYFSSDIFYEIIESIEINIVIEFSDCRKIVKGHNYIHEKLDDYIFKITDESFFQVNTLATEVLYNKVLELTMKYIKPTGQDILFDLCCGTGTIGIYLSKIFTKVFGIDIKQSSIIDANHNKLLNNIPNIEFICNPIENVLEKLISECLEKNPDSTFFAVVDPPRTGMHGGVQNTINNCPNLEYLIYVSCNVVTFKRDMEILGKQFEAIETICLDLFPHTPHCELIVVLKKIDLSIY.

3 residues coordinate S-adenosyl-L-methionine: Gln207, Asp261, and Asp314. Cys342 serves as the catalytic Nucleophile.

The protein belongs to the class I-like SAM-binding methyltransferase superfamily. RNA M5U methyltransferase family.

This is Putative RNA methyltransferase R405 from Acanthamoeba polyphaga (Amoeba).